Here is a 200-residue protein sequence, read N- to C-terminus: Lipopolysaccharide core heptose(II)-phosphate phosphatase (200 aa).

Residues 1 to 25 form the signal peptide; sequence MLAFCRSSLKSKKYFIILLALAAIA.

It belongs to the phosphoglycerate mutase family. Ais subfamily.

It localises to the periplasm. Its pathway is bacterial outer membrane biogenesis; lipopolysaccharide metabolism. In terms of biological role, catalyzes the dephosphorylation of heptose(II) of the outer membrane lipopolysaccharide core. The chain is Lipopolysaccharide core heptose(II)-phosphate phosphatase from Escherichia coli O7:K1 (strain IAI39 / ExPEC).